The sequence spans 72 residues: MSKQTAIEQDGVILEALSNAMFKVELQNGHVITAHISGKMRMHYIKILPGDKVKVEMSPYDLTKGRISFRYK.

The region spanning 1-72 is the S1-like domain; that stretch reads MSKQTAIEQD…TKGRISFRYK (72 aa).

It belongs to the IF-1 family. As to quaternary structure, component of the 30S ribosomal translation pre-initiation complex which assembles on the 30S ribosome in the order IF-2 and IF-3, IF-1 and N-formylmethionyl-tRNA(fMet); mRNA recruitment can occur at any time during PIC assembly.

It localises to the cytoplasm. In terms of biological role, one of the essential components for the initiation of protein synthesis. Stabilizes the binding of IF-2 and IF-3 on the 30S subunit to which N-formylmethionyl-tRNA(fMet) subsequently binds. Helps modulate mRNA selection, yielding the 30S pre-initiation complex (PIC). Upon addition of the 50S ribosomal subunit IF-1, IF-2 and IF-3 are released leaving the mature 70S translation initiation complex. This Porphyromonas gingivalis (strain ATCC BAA-308 / W83) protein is Translation initiation factor IF-1.